The primary structure comprises 169 residues: Head completion/stabilization protein (169 aa).

To phage HP1 protein ORF20.

Its function is as follows. Carries out the completion of filled heads by rendering the newly packaged DNA in filled heads resistant to DNase. The protein is assumed to bind to DNA-filled capsids. This Enterobacteriaceae (Bacteriophage P2) protein is Head completion/stabilization protein (L).